A 42-amino-acid chain; its full sequence is Delta-hexatoxin-Hv1a (42 aa).

4 disulfide bridges follow: Cys1/Cys15, Cys8/Cys20, Cys14/Cys31, and Cys16/Cys42.

Belongs to the neurotoxin 06 (delta-actx) family. As to expression, expressed by the venom gland.

The protein localises to the secreted. In terms of biological role, inhibits tetrodotoxin-sensitive voltage-gated sodium channels (Nav) by binding to site 3. Slows the inactivation, and causes a prolongation of action potential duration resulting in repetitive firing in autonomic and motor nerve fibers. Does not depolarize the resting potential. Does not affect tetrodotoxin-resistant sodium channels. This lethal neurotoxin is active on both insect and mammalian voltage-gated sodium channels. Pan-neuronal expression in Drosophila is lethal but flies engineered to express the toxin only in pacemaker neurons have profound defects in circadian rhythm but a normal lifespan. This Hadronyche versuta (Blue mountains funnel-web spider) protein is Delta-hexatoxin-Hv1a.